The primary structure comprises 322 residues: Germ cell-specific gene 1-like protein (322 aa).

Topologically, residues 1-8 (MKTSRRGR) are cytoplasmic. Residues 9–29 (ALLAVALNLLALLFATTAFLT) traverse the membrane as a helical segment. Over 30 to 122 (TYWCQGTQRV…FIDLAPASEK (93 aa)) the chain is Extracellular. A helical transmembrane segment spans residues 123–143 (GVLWLSVVSEVLYILLLVVGF). Over 144-163 (SLMCLELLHSSSVIDGLKLN) the chain is Cytoplasmic. A helical transmembrane segment spans residues 164 to 184 (AFAAVFTVLSGLLGMVAHMMY). The Extracellular segment spans residues 185–207 (TQVFQVTVSLGPEDWRPHSWDYG). Residues 208–228 (WSFCLAWGSFTCCMAASVTTL) form a helical membrane-spanning segment. Over 229 to 322 (NSYTKTVIEF…RQCWVLGHWV (94 aa)) the chain is Cytoplasmic. A Phosphoserine modification is found at S274.

The protein belongs to the GSG1 family. As to quaternary structure, component of the inner core of AMPAR complexes. AMPAR complexes consist of an inner core made of 4 pore-forming GluA/GRIA proteins (GRIA1, GRIA2, GRIA3 and GRIA4) and 4 major auxiliary subunits arranged in a twofold symmetry. One of the two pairs of distinct binding sites is occupied either by CNIH2, CNIH3 or CACNG2, CACNG3. The other harbors CACNG2, CACNG3, CACNG4, CACNG8 or GSG1L. This inner core of AMPAR complexes is complemented by outer core constituents binding directly to the GluA/GRIA proteins at sites distinct from the interaction sites of the inner core constituents. Outer core constituents include at least PRRT1, PRRT2, CKAMP44/SHISA9, FRRS1L and NRN1. The proteins of the inner and outer core serve as a platform for other, more peripherally associated AMPAR constituents. Alone or in combination, these auxiliary subunits control the gating and pharmacology of the AMPAR complexes and profoundly impact their biogenesis and protein processing. As to expression, expressed in the brain (at protein level).

It is found in the cell membrane. Its subcellular location is the synapse. As a component of the inner core of AMPAR complexes, modifies AMPA receptor (AMPAR) gating. The sequence is that of Germ cell-specific gene 1-like protein (Gsg1l) from Rattus norvegicus (Rat).